Reading from the N-terminus, the 796-residue chain is Toll-like receptor 6 (796 aa).

An N-terminal signal peptide occupies residues 1–31 (MTKDKEPIVKSFHFVCLMIIIVGTRIQFSDG). Residues 32-586 (NEFAVDKSKR…MSELSCNITL (555 aa)) are Extracellular-facing. 19 LRR repeats span residues 54-77 (TKVL…FLSE), 78-101 (LTVL…FNQD), 102-122 (LEYL…PIVS), 123-147 (FRHL…NLSQ), 148-168 (LNFL…PIAH), 169-196 (LHLS…ILNA), 197-219 (KTLH…SVNT), 220-250 (LGCL…RGST), 251-277 (LLNF…WPKP), 278-303 (VEYL…SKTT), 304-330 (LKAL…VFSE), 331-354 (MNIM…APST), 355-378 (FKFL…TLVK), 379-404 (LETL…DMPS), 405-429 (LEIL…WVES), 430-450 (IVVL…CLPP), 451-474 (RIKV…KLEA), 475-496 (LQEL…SFSS), and 497-520 (LSVL…SCQK). Cys117 and Cys139 are joined by a disulfide. Asn144 carries N-linked (GlcNAc...) asparagine glycosylation. N-linked (GlcNAc...) asparagine glycans are attached at residues Asn186 and Asn214. Residues Cys235 and Cys265 are joined by a disulfide bond. N-linked (GlcNAc...) asparagine glycosylation is found at Asn253 and Asn285. An intrachain disulfide couples Cys348 to Cys373. Residue Asn359 is glycosylated (N-linked (GlcNAc...) asparagine). Residues Asn423 and Asn434 are each glycosylated (N-linked (GlcNAc...) asparagine). Cys424 and Cys447 form a disulfide bridge. The region spanning 521 to 575 (MRSIKAGDNPFQCTCELREFVKNIDQVSSEVLEGWPDSYKCDYPESYRGSPLKDF) is the LRRCT domain. Asn583 carries N-linked (GlcNAc...) asparagine glycosylation. Residues 587 to 607 (LIVTIGATMLVLAVTVTSLCI) form a helical membrane-spanning segment. Over 608–796 (YLDLPWYLRM…LVTENNDVKS (189 aa)) the chain is Cytoplasmic. Residues 640-781 (LQFHAFISYS…LFWANIRAAF (142 aa)) form the TIR domain.

It belongs to the Toll-like receptor family. Homodimer (via cytoplasmic TIR domain). Heterodimer with TLR2 via their respective extracellular domains. Binds MYD88 via their respective TIR domains. Interacts with CD36, following CD36 stimulation by oxLDL or amyloid-beta 42, and forms a heterodimer with TLR4. The trimeric complex is internalized and triggers inflammatory response. LYN kinase activity facilitates TLR4:TLR6 heterodimerization and signal initiation. The heterodimer TLR2:TLR6 interacts with CD14 and CD36 in response to triacylated lipopeptides. Detected in monocytes, CD11c+ immature dendritic cells, plasmacytoid pre-dendritic cells and dermal microvessel endothelial cells.

Its subcellular location is the cell membrane. The protein resides in the cytoplasmic vesicle. The protein localises to the phagosome membrane. It is found in the membrane raft. It localises to the golgi apparatus. Its function is as follows. Participates in the innate immune response to Gram-positive bacteria and fungi. Specifically recognizes diacylated and, to a lesser extent, triacylated lipopeptides. In response to diacylated lipopeptides, forms the activation cluster TLR2:TLR6:CD14:CD36, this cluster triggers signaling from the cell surface and subsequently is targeted to the Golgi in a lipid-raft dependent pathway. Acts via MYD88 and TRAF6, leading to NF-kappa-B activation, cytokine secretion and the inflammatory response. Recognizes mycoplasmal macrophage-activating lipopeptide-2kD (MALP-2), soluble tuberculosis factor (STF), phenol-soluble modulin (PSM) and B.burgdorferi outer surface protein A lipoprotein (OspA-L) cooperatively with TLR2. In complex with TLR4, promotes sterile inflammation in monocytes/macrophages in response to oxidized low-density lipoprotein (oxLDL) or amyloid-beta 42. In this context, the initial signal is provided by oxLDL- or amyloid-beta 42-binding to CD36. This event induces the formation of a heterodimer of TLR4 and TLR6, which is rapidly internalized and triggers inflammatory response, leading to the NF-kappa-B-dependent production of CXCL1, CXCL2 and CCL9 cytokines, via MYD88 signaling pathway, and CCL5 cytokine, via TICAM1 signaling pathway, as well as IL1B secretion. This Homo sapiens (Human) protein is Toll-like receptor 6 (TLR6).